Consider the following 260-residue polypeptide: MKIKDYAVDTARAVAFLSRLPMPPALFNGYDGRLGRLVRAFPFAGLLIGFVPAFALLLLLGLRADPLVAALVALAVQALVTGALHEDGLADTADGIGGGKSREQSLIIMKDSRIGTYGAIALILSFAIRAAALAAIVRHSSPLAAVLAIPAVAALSRGAITWHWQRLPPAKADGVAASTGQPDEAAMHFALVAAGLLAALLIWPAFGLWPLVASLLAAGAAGFVCTVFIRRRLAGHTGDTLGATQQICEIATLCALATAL.

6 helical membrane-spanning segments follow: residues 40–60 (AFPF…LLLL), 64–84 (ADPL…TGAL), 117–137 (YGAI…AAIV), 142–162 (PLAA…AITW), 189–209 (FALV…FGLW), and 210–230 (PLVA…VFIR).

This sequence belongs to the CobS family. Requires Mg(2+) as cofactor.

The protein localises to the cell inner membrane. It catalyses the reaction alpha-ribazole + adenosylcob(III)inamide-GDP = adenosylcob(III)alamin + GMP + H(+). The enzyme catalyses alpha-ribazole 5'-phosphate + adenosylcob(III)inamide-GDP = adenosylcob(III)alamin 5'-phosphate + GMP + H(+). The protein operates within cofactor biosynthesis; adenosylcobalamin biosynthesis; adenosylcobalamin from cob(II)yrinate a,c-diamide: step 7/7. In terms of biological role, joins adenosylcobinamide-GDP and alpha-ribazole to generate adenosylcobalamin (Ado-cobalamin). Also synthesizes adenosylcobalamin 5'-phosphate from adenosylcobinamide-GDP and alpha-ribazole 5'-phosphate. The sequence is that of Adenosylcobinamide-GDP ribazoletransferase from Rhizobium etli (strain CIAT 652).